A 199-amino-acid polypeptide reads, in one-letter code: Probable GTP-binding protein EngB (199 aa).

The EngB-type G domain occupies 28–199 (DIPEIALAGR…QAWDAILEQI (172 aa)). Residues 36–43 (GRSNVGKS), 63–67 (GKTQL), 81–84 (DVPG), 148–151 (TKAD), and 180–182 (FSS) contribute to the GTP site. Residues serine 43 and threonine 65 each contribute to the Mg(2+) site.

The protein belongs to the TRAFAC class TrmE-Era-EngA-EngB-Septin-like GTPase superfamily. EngB GTPase family. Mg(2+) is required as a cofactor.

Its function is as follows. Necessary for normal cell division and for the maintenance of normal septation. In Streptococcus uberis (strain ATCC BAA-854 / 0140J), this protein is Probable GTP-binding protein EngB.